A 443-amino-acid chain; its full sequence is Cyclic AMP receptor 4 (443 aa).

Over 1–11 (MKVLQEINLTY) the chain is Extracellular. N-linked (GlcNAc...) asparagine glycosylation occurs at Asn-8. The helical transmembrane segment at 12 to 32 (SILVIADFSSIFGCLLVLIAF) threads the bilayer. The Cytoplasmic segment spans residues 33–44 (KKLKLLRNHITR). Residues 45–65 (VIACFCVSSLLKDIISTGLTL) form a helical membrane-spanning segment. Topologically, residues 66 to 89 (SLGPQNEAGSTSFQCYLYAITITY) are extracellular. Residues 90–110 (GSLACWLWTLCLAFSIYNLIV) traverse the membrane as a helical segment. The Cytoplasmic segment spans residues 111 to 119 (KREPEPEKY). A helical membrane pass occupies residues 120-140 (EKFYHGVCWTIPLICVIVMLA). The Extracellular portion of the chain corresponds to 141-161 (KKTIEPVGNWCWISEKYVGYR). A helical transmembrane segment spans residues 162 to 182 (FGLFYGPFFAIWIISAVLVGL). Residues 183–208 (TSRYTYSVIRNSVSDNKDKHMTYQFK) lie on the Cytoplasmic side of the membrane. A helical membrane pass occupies residues 209–229 (LINYIIVFLLCWVFAIVNRIL). The Extracellular segment spans residues 230–263 (NGLGYYPTLPNILHTYFSVSHGFFASVTFIYNNP). Residues 264-284 (LMWRYWGSKIFLIFAKFGYFV) form a helical membrane-spanning segment. Topologically, residues 285–443 (ELQRRLDRNK…DEREKKDNKF (159 aa)) are cytoplasmic. Disordered regions lie at residues 325–354 (NDIS…QQSP) and 396–443 (SFEI…DNKF). Low complexity predominate over residues 332-352 (QQQQQQQQTPQQPQQQFQQQQ). Polar residues predominate over residues 396 to 410 (SFEITQPSNDLNTIE). The span at 411–425 (NNNNYNNNNNNNNNN) shows a compositional bias: low complexity. A compositionally biased stretch (basic and acidic residues) spans 429–443 (IEKEKDEREKKDNKF).

It belongs to the G-protein coupled receptor 5 family. C-terminal Ser or Thr residues may be phosphorylated.

The protein localises to the membrane. Its function is as follows. Receptor for cAMP. Regulates axial patterning and cellular differentiation during late development. The activity of this receptor is mediated by G proteins. This chain is Cyclic AMP receptor 4 (carD), found in Dictyostelium discoideum (Social amoeba).